We begin with the raw amino-acid sequence, 510 residues long: Fumarate hydratase, mitochondrial (510 aa).

A mitochondrion-targeting transit peptide spans 1 to 44 (MYRALWLLARSRRLVRPPASALASAPGLSGAAVPSFWPPNAARM). 3 positions are modified to N6-acetyllysine; alternate: K61, K66, and K80. K61, K66, and K80 each carry N6-succinyllysine; alternate. A phosphothreonine mark is found at T85 and T90. K94 carries the N6-acetyllysine modification. N6-acetyllysine; alternate is present on residues K115 and K122. An N6-succinyllysine; alternate mark is found at K115 and K122. Substrate is bound by residues 145–147 (SGT), 176–179 (HPND), and 186–188 (SSN). Residue K213 is modified to N6-acetyllysine. At K223 the chain carries N6-acetyllysine; alternate. Position 223 is an N6-succinyllysine; alternate (K223). T234 contributes to the substrate binding site. The active-site Proton donor/acceptor is the H235. Position 236 is a phosphothreonine (T236). Position 256 is an N6-acetyllysine (K256). Residue K292 is modified to N6-acetyllysine; alternate. Residue K292 is modified to N6-succinyllysine; alternate. S365 is an active-site residue. Residues S366 and 371–373 (KVN) contribute to the substrate site. The residue at position 366 (S366) is a Phosphoserine. N6-succinyllysine occurs at positions 467 and 473. N6-acetyllysine is present on K502.

This sequence belongs to the class-II fumarase/aspartase family. Fumarase subfamily. As to quaternary structure, homotetramer. Interacts with H2AZ1. Phosphorylation at Thr-236 by PRKDC in response to DNA damage promotes translocation to the nucleus and recruitment to DNA double-strand breaks (DSBs).

The protein localises to the mitochondrion. The protein resides in the cytoplasm. It localises to the cytosol. Its subcellular location is the nucleus. It is found in the chromosome. The catalysed reaction is (S)-malate = fumarate + H2O. The protein operates within carbohydrate metabolism; tricarboxylic acid cycle; (S)-malate from fumarate: step 1/1. In terms of biological role, catalyzes the reversible stereospecific interconversion of fumarate to L-malate. Experiments in other species have demonstrated that specific isoforms of this protein act in defined pathways and favor one direction over the other. Functionally, catalyzes the hydration of fumarate to L-malate in the tricarboxylic acid (TCA) cycle to facilitate a transition step in the production of energy in the form of NADH. Its function is as follows. Catalyzes the dehydration of L-malate to fumarate. Fumarate metabolism in the cytosol plays a role during urea cycle and arginine metabolism; fumarate being a by-product of the urea cycle and amino-acid catabolism. Also plays a role in DNA repair by promoting non-homologous end-joining (NHEJ). In response to DNA damage and phosphorylation by PRKDC, translocates to the nucleus and accumulates at DNA double-strand breaks (DSBs): acts by catalyzing formation of fumarate, an inhibitor of KDM2B histone demethylase activity, resulting in enhanced dimethylation of histone H3 'Lys-36' (H3K36me2). The sequence is that of Fumarate hydratase, mitochondrial from Macaca fascicularis (Crab-eating macaque).